The following is a 457-amino-acid chain: Glucuronide carrier protein homolog (457 aa).

Residues 1 to 11 (MNQQLSWRTIV) lie on the Cytoplasmic side of the membrane. The chain crosses the membrane as a helical span at residues 12 to 34 (GYSLGDVANNFAFAMGALFLLSY). At 35 to 37 (YTD) the chain is on the periplasmic side. The helical transmembrane segment at 38-60 (VAGVGAAAAGTMLLLVRVFDAFA) threads the bilayer. At 61 to 79 (DVFAGRVVDSVNTRWGKFR) the chain is on the cytoplasmic side. A helical transmembrane segment spans residues 80 to 100 (PFLLFGTAPLMIFSVLVFWVL). The Periplasmic segment spans residues 101-108 (TDWSHGSK). The helical transmembrane segment at 109–129 (VVYAYLTYMGLGLCYSLVNIP) threads the bilayer. Topologically, residues 130–146 (YGSLATAMTQQPQSRAR) are cytoplasmic. A helical membrane pass occupies residues 147–167 (LGAARGIAASLTFVCLAFLIG). The Periplasmic segment spans residues 168 to 180 (PSIKNSSPEEMVS). Residues 181–201 (VYHFWTIVLAIAGMVLYFICF) traverse the membrane as a helical segment. At 202–228 (KSTRENVVRIVAQPSLNISLQTLKRNR) the chain is on the cytoplasmic side. A helical transmembrane segment spans residues 229 to 249 (PLFMLCIGALCVLISTFAVSA). The Periplasmic portion of the chain corresponds to 250–263 (SSLFYVRYVLNDTG). A helical transmembrane segment spans residues 264-284 (LFTVLVLVQNLVGTVASAPLV). Residues 285 to 296 (PGMVARIGKKNT) lie on the Cytoplasmic side of the membrane. Residues 297-316 (FLIGALLGTCGYLLFFWVSV) form a helical membrane-spanning segment. The Periplasmic segment spans residues 317 to 320 (WSLP). The helical transmembrane segment at 321–343 (VALVALAIASIGQGVTMTVMWAL) threads the bilayer. Residues 344–372 (EADTVEYGEYLTGVRIEGLTYSLFSFTRK) are Cytoplasmic-facing. A helical membrane pass occupies residues 373–393 (CGQAIGGSIPAFILGLSGYIA). At 394–408 (NQVQTPEVIMGIRTS) the chain is on the periplasmic side. Residues 409-429 (IALVPCGFMLLAFVIIWFYPL) form a helical membrane-spanning segment. At 430 to 457 (TDKKFKEIVVEIDNRKKVQQQLISDITN) the chain is on the cytoplasmic side.

This sequence belongs to the sodium:galactoside symporter (TC 2.A.2) family.

It localises to the cell inner membrane. This chain is Glucuronide carrier protein homolog (uidB), found in Escherichia coli (strain K12).